The chain runs to 257 residues: Imidazole glycerol phosphate synthase subunit HisF (257 aa).

Residues Asp-12 and Asp-131 contribute to the active site.

It belongs to the HisA/HisF family. Heterodimer of HisH and HisF.

The protein localises to the cytoplasm. It catalyses the reaction 5-[(5-phospho-1-deoxy-D-ribulos-1-ylimino)methylamino]-1-(5-phospho-beta-D-ribosyl)imidazole-4-carboxamide + L-glutamine = D-erythro-1-(imidazol-4-yl)glycerol 3-phosphate + 5-amino-1-(5-phospho-beta-D-ribosyl)imidazole-4-carboxamide + L-glutamate + H(+). Its pathway is amino-acid biosynthesis; L-histidine biosynthesis; L-histidine from 5-phospho-alpha-D-ribose 1-diphosphate: step 5/9. IGPS catalyzes the conversion of PRFAR and glutamine to IGP, AICAR and glutamate. The HisF subunit catalyzes the cyclization activity that produces IGP and AICAR from PRFAR using the ammonia provided by the HisH subunit. In Paraburkholderia phytofirmans (strain DSM 17436 / LMG 22146 / PsJN) (Burkholderia phytofirmans), this protein is Imidazole glycerol phosphate synthase subunit HisF.